A 135-amino-acid polypeptide reads, in one-letter code: Small ribosomal subunit protein uS12 (135 aa).

Asp89 carries the 3-methylthioaspartic acid modification. The disordered stretch occupies residues 106–135 (GVANRRQSRSKYGAKRPKAGAAQATKGGKK). The segment covering 111-123 (RQSRSKYGAKRPK) has biased composition (basic residues). Residues 124 to 135 (AGAAQATKGGKK) show a composition bias toward low complexity.

It belongs to the universal ribosomal protein uS12 family. Part of the 30S ribosomal subunit. Contacts proteins S8 and S17. May interact with IF1 in the 30S initiation complex.

Its function is as follows. With S4 and S5 plays an important role in translational accuracy. Functionally, interacts with and stabilizes bases of the 16S rRNA that are involved in tRNA selection in the A site and with the mRNA backbone. Located at the interface of the 30S and 50S subunits, it traverses the body of the 30S subunit contacting proteins on the other side and probably holding the rRNA structure together. The combined cluster of proteins S8, S12 and S17 appears to hold together the shoulder and platform of the 30S subunit. The sequence is that of Small ribosomal subunit protein uS12 from Hydrogenobaculum sp. (strain Y04AAS1).